Reading from the N-terminus, the 182-residue chain is tRNA-splicing endonuclease (182 aa).

Active-site residues include Tyr119, His127, and Lys158.

This sequence belongs to the tRNA-intron endonuclease family. Archaeal short subfamily. Homotetramer; although the tetramer contains four active sites, only two participate in the cleavage. Therefore, it should be considered as a dimer of dimers.

The enzyme catalyses pretRNA = a 3'-half-tRNA molecule with a 5'-OH end + a 5'-half-tRNA molecule with a 2',3'-cyclic phosphate end + an intron with a 2',3'-cyclic phosphate and a 5'-hydroxyl terminus.. Functionally, endonuclease that removes tRNA introns. Cleaves pre-tRNA at the 5'- and 3'-splice sites to release the intron. The products are an intron and two tRNA half-molecules bearing 2',3' cyclic phosphate and 5'-OH termini. Recognizes a pseudosymmetric substrate in which 2 bulged loops of 3 bases are separated by a stem of 4 bp. This chain is tRNA-splicing endonuclease, found in Saccharolobus solfataricus (strain ATCC 35092 / DSM 1617 / JCM 11322 / P2) (Sulfolobus solfataricus).